A 431-amino-acid polypeptide reads, in one-letter code: Histidine--tRNA ligase (431 aa).

This sequence belongs to the class-II aminoacyl-tRNA synthetase family. Homodimer.

It is found in the cytoplasm. It carries out the reaction tRNA(His) + L-histidine + ATP = L-histidyl-tRNA(His) + AMP + diphosphate + H(+). This Finegoldia magna (strain ATCC 29328 / DSM 20472 / WAL 2508) (Peptostreptococcus magnus) protein is Histidine--tRNA ligase.